Reading from the N-terminus, the 422-residue chain is Glucose-1-phosphate adenylyltransferase (422 aa).

Residues tyrosine 109, glycine 175, 190 to 191, and serine 208 contribute to the alpha-D-glucose 1-phosphate site; that span reads EK.

The protein belongs to the bacterial/plant glucose-1-phosphate adenylyltransferase family. As to quaternary structure, homotetramer.

The catalysed reaction is alpha-D-glucose 1-phosphate + ATP + H(+) = ADP-alpha-D-glucose + diphosphate. It participates in glycan biosynthesis; glycogen biosynthesis. Functionally, involved in the biosynthesis of ADP-glucose, a building block required for the elongation reactions to produce glycogen. Catalyzes the reaction between ATP and alpha-D-glucose 1-phosphate (G1P) to produce pyrophosphate and ADP-Glc. The polypeptide is Glucose-1-phosphate adenylyltransferase (Shewanella amazonensis (strain ATCC BAA-1098 / SB2B)).